The chain runs to 364 residues: Anionic peroxidase (364 aa).

A signal peptide spans 1-20 (MASFMKQLSLVLSFIALALA). Residues 21–66 (GCAVYQNTQTAMKDQLKVTPTWLDNTLKSTNLLSLGLGKPSGGKLG) constitute a propeptide that is removed on maturation. His-99 functions as the Proton acceptor in the catalytic mechanism. Residues Asp-100, Val-103, Gly-105, and Asp-107 each contribute to the Ca(2+) site. A disulfide bridge connects residues Cys-101 and Cys-106. 4 N-linked (GlcNAc...) asparagine glycosylation sites follow: Asn-113, Asn-188, Asn-202, and Asn-216. 2 disulfide bridges follow: Cys-155/Cys-343 and Cys-234/Cys-255. Residue His-227 coordinates heme b. Thr-228 contacts Ca(2+). Asn-254 and Asn-260 each carry an N-linked (GlcNAc...) asparagine glycan. Asp-268, Thr-270, and Asp-275 together coordinate Ca(2+). Residue Asn-299 is glycosylated (N-linked (GlcNAc...) asparagine).

It belongs to the peroxidase family. Classical plant (class III) peroxidase subfamily. Requires Ca(2+) as cofactor. Heme b is required as a cofactor. Highly expressed in suspension cultured cells and calli. Weak expression also found in the stems of intact plants. No expression in leaf, tuberous root and non-tuberous root.

The protein localises to the secreted. It catalyses the reaction 2 a phenolic donor + H2O2 = 2 a phenolic radical donor + 2 H2O. In terms of biological role, removal of H(2)O(2), oxidation of toxic reductants, biosynthesis and degradation of lignin, suberization, auxin catabolism, response to environmental stresses such as wounding, pathogen attack and oxidative stress. These functions might be dependent on each isozyme/isoform in each plant tissue. Its function is as follows. May contribute to protection against cold-induced oxidative stress. This chain is Anionic peroxidase, found in Ipomoea batatas (Sweet potato).